The following is a 152-amino-acid chain: MKIEIVVIGKLKEYIRPAVKEYIKMLSSFAEIKLTQIKHAKGYKDFDKSLKKEAEGIISQLKESDYVILLDQSGRSCDSISFANHFHQLIQINSSIVFVIGGPFGVDESLKKRANELLSLSDLTFTHQLAVVILLEQLFRAFKIINNQKYHY.

S-adenosyl-L-methionine contacts are provided by residues Leu-70, Gly-101, and 120 to 125 (LSDLTF).

It belongs to the RNA methyltransferase RlmH family. In terms of assembly, homodimer.

It is found in the cytoplasm. The catalysed reaction is pseudouridine(1915) in 23S rRNA + S-adenosyl-L-methionine = N(3)-methylpseudouridine(1915) in 23S rRNA + S-adenosyl-L-homocysteine + H(+). Specifically methylates the pseudouridine at position 1915 (m3Psi1915) in 23S rRNA. This is Ribosomal RNA large subunit methyltransferase H from Pseudothermotoga lettingae (strain ATCC BAA-301 / DSM 14385 / NBRC 107922 / TMO) (Thermotoga lettingae).